A 271-amino-acid chain; its full sequence is Bifunctional protein FolD (271 aa).

Residues 154–156, serine 181, and isoleucine 222 contribute to the NADP(+) site; that span reads GRS.

Belongs to the tetrahydrofolate dehydrogenase/cyclohydrolase family. As to quaternary structure, homodimer.

The enzyme catalyses (6R)-5,10-methylene-5,6,7,8-tetrahydrofolate + NADP(+) = (6R)-5,10-methenyltetrahydrofolate + NADPH. It catalyses the reaction (6R)-5,10-methenyltetrahydrofolate + H2O = (6R)-10-formyltetrahydrofolate + H(+). Its pathway is one-carbon metabolism; tetrahydrofolate interconversion. In terms of biological role, catalyzes the oxidation of 5,10-methylenetetrahydrofolate to 5,10-methenyltetrahydrofolate and then the hydrolysis of 5,10-methenyltetrahydrofolate to 10-formyltetrahydrofolate. This is Bifunctional protein FolD from Thermotoga sp. (strain RQ2).